The following is a 725-amino-acid chain: Another transcription unit protein (725 aa).

Residues 1 to 10 (MGSQNSDDDS) show a composition bias toward acidic residues. Disordered regions lie at residues 1–379 (MGSQ…PETR), 566–603 (RQAM…EGSD), and 617–725 (YKKG…SDND). The span at 11–70 (GSSGSSRSGSRSVTPQGGSAPGSQRSRRSGSGSDRSRSGSRSSRSRSGSGSPRSARSGSA) shows a compositional bias: low complexity. Basic residues predominate over residues 82-101 (RSKRSRSAHSRRSGSARSRK). Polar residues predominate over residues 104-116 (TPESPQSHRSGSL). Residues 117–140 (QSRKSGSPQSRRSGSPQSRKSGST) are compositionally biased toward low complexity. The segment covering 141–160 (HSRRSGSAHSRRSGSARSRK) has biased composition (basic residues). Phosphoserine is present on residues Ser175, Ser186, Ser188, and Ser190. Over residues 206 to 223 (SRSRSRSRSGSRTSRSRS) the composition is skewed to basic residues. Residues 224-242 (KTGTPSPNRSRSGSASGSG) show a composition bias toward low complexity. Phosphoserine occurs at positions 265, 267, and 269. Thr286 is subject to Phosphothreonine. 3 positions are modified to phosphoserine: Ser288, Ser290, and Ser312. Residues 306-318 (GDADDISDDEDEA) show a composition bias toward acidic residues. Over residues 325–353 (SPVRSKSRSQSKSHSHSRSMSHSRSRSRS) the composition is skewed to basic residues. Positions 354 to 369 (RSRDKVESQVESAPKE) are enriched in basic and acidic residues. Ser355 bears the Phosphoserine mark. The segment covering 571–582 (NQHKSLPKKKKP) has biased composition (basic residues). Thr593 is subject to Phosphothreonine. A phosphoserine mark is found at Ser595, Ser602, and Ser631. Phosphothreonine is present on Thr632. Ser635, Ser636, and Ser642 each carry phosphoserine. Basic and acidic residues predominate over residues 644 to 665 (FEARRSKKVDKAKASKALRDSD). Positions 710-725 (SGSGSGSGSGSGSDND) are enriched in gly residues.

This chain is Another transcription unit protein (Atu), found in Drosophila melanogaster (Fruit fly).